A 220-amino-acid polypeptide reads, in one-letter code: Putative cobalt transport protein CbiM (220 aa).

5 consecutive transmembrane segments (helical) span residues 6 to 26 (GFLP…IVVY), 43 to 63 (ALVA…FPSV), 74 to 94 (GLLV…IVLL), 98 to 118 (LLLA…MGII), and 182 to 202 (IFTL…AAVI).

The protein belongs to the CbiM family. As to quaternary structure, forms an energy-coupling factor (ECF) transporter complex composed of an ATP-binding protein (A component, CbiO), a transmembrane protein (T component, CbiQ) and 2 possible substrate-capture proteins (S components, CbiM and CbiN) of unknown stoichimetry.

It is found in the cell membrane. Its pathway is cofactor biosynthesis; adenosylcobalamin biosynthesis. Its function is as follows. Part of the energy-coupling factor (ECF) transporter complex CbiMNOQ involved in cobalt import. This Haloquadratum walsbyi (strain DSM 16790 / HBSQ001) protein is Putative cobalt transport protein CbiM.